Consider the following 418-residue polypeptide: ATP-dependent Clp protease ATP-binding subunit ClpX (418 aa).

Residues 1–54 (MTRKDDESDQFFCSFCGKNQKEVKKLIAGPSVYICNECVSLCEEIIEDEDKESL) enclose the ClpX-type ZB domain. The Zn(2+) site is built by cysteine 13, cysteine 16, cysteine 35, and cysteine 38. Residue 120 to 127 (PTGCGKTL) coordinates ATP.

The protein belongs to the ClpX chaperone family. Component of the ClpX-ClpP complex. Forms a hexameric ring that, in the presence of ATP, binds to fourteen ClpP subunits assembled into a disk-like structure with a central cavity, resembling the structure of eukaryotic proteasomes.

Functionally, ATP-dependent specificity component of the Clp protease. It directs the protease to specific substrates. Can perform chaperone functions in the absence of ClpP. The protein is ATP-dependent Clp protease ATP-binding subunit ClpX of Desulforapulum autotrophicum (strain ATCC 43914 / DSM 3382 / VKM B-1955 / HRM2) (Desulfobacterium autotrophicum).